Here is a 159-residue protein sequence, read N- to C-terminus: 3-hydroxyacyl-[acyl-carrier-protein] dehydratase FabZ (159 aa).

The active site involves histidine 58.

The protein belongs to the thioester dehydratase family. FabZ subfamily.

It localises to the cytoplasm. It carries out the reaction a (3R)-hydroxyacyl-[ACP] = a (2E)-enoyl-[ACP] + H2O. Involved in unsaturated fatty acids biosynthesis. Catalyzes the dehydration of short chain beta-hydroxyacyl-ACPs and long chain saturated and unsaturated beta-hydroxyacyl-ACPs. The protein is 3-hydroxyacyl-[acyl-carrier-protein] dehydratase FabZ of Helicobacter pylori (strain HPAG1).